The primary structure comprises 445 residues: Putative ATP-dependent RNA helicase L538 (445 aa).

One can recognise a Helicase ATP-binding domain in the interval 14–151 (IEFMKNNRGV…AVLVNIVRGE (138 aa)). Position 27 to 34 (27 to 34 (HSTGAGKT)) interacts with ATP. A DEAH box motif is present at residues 101-104 (DEAH). In terms of domain architecture, Helicase C-terminal spans 273 to 442 (KIEDIMKYII…VIDASIENNY (170 aa)).

The protein belongs to the DEAD box helicase family. DEAH subfamily.

It is found in the virion. The catalysed reaction is ATP + H2O = ADP + phosphate + H(+). This chain is Putative ATP-dependent RNA helicase L538, found in Acanthamoeba polyphaga mimivirus (APMV).